The chain runs to 76 residues: Large ribosomal subunit protein eL20 (76 aa).

Belongs to the eukaryotic ribosomal protein eL20 family. In terms of assembly, part of the 50S ribosomal subunit. Binds 23S rRNA.

The chain is Large ribosomal subunit protein eL20 from Methanococcus vannielii (strain ATCC 35089 / DSM 1224 / JCM 13029 / OCM 148 / SB).